The following is a 470-amino-acid chain: Methylenetetrahydrofolate--tRNA-(uracil-5-)-methyltransferase TrmFO (470 aa).

Residue 10–15 (GAGLAG) participates in FAD binding.

The protein belongs to the MnmG family. TrmFO subfamily. FAD is required as a cofactor.

Its subcellular location is the cytoplasm. The enzyme catalyses uridine(54) in tRNA + (6R)-5,10-methylene-5,6,7,8-tetrahydrofolate + NADH + H(+) = 5-methyluridine(54) in tRNA + (6S)-5,6,7,8-tetrahydrofolate + NAD(+). The catalysed reaction is uridine(54) in tRNA + (6R)-5,10-methylene-5,6,7,8-tetrahydrofolate + NADPH + H(+) = 5-methyluridine(54) in tRNA + (6S)-5,6,7,8-tetrahydrofolate + NADP(+). Catalyzes the folate-dependent formation of 5-methyl-uridine at position 54 (M-5-U54) in all tRNAs. In Prochlorococcus marinus (strain MIT 9215), this protein is Methylenetetrahydrofolate--tRNA-(uracil-5-)-methyltransferase TrmFO.